The following is a 253-amino-acid chain: 5'-nucleotidase SurE (253 aa).

Positions 8, 9, 39, and 91 each coordinate a divalent metal cation.

This sequence belongs to the SurE nucleotidase family. A divalent metal cation is required as a cofactor.

The protein localises to the cytoplasm. It catalyses the reaction a ribonucleoside 5'-phosphate + H2O = a ribonucleoside + phosphate. Functionally, nucleotidase that shows phosphatase activity on nucleoside 5'-monophosphates. The polypeptide is 5'-nucleotidase SurE (Leptothrix cholodnii (strain ATCC 51168 / LMG 8142 / SP-6) (Leptothrix discophora (strain SP-6))).